A 1453-amino-acid chain; its full sequence is Scavenger receptor cysteine-rich type 1 protein M160 (1453 aa).

Residues 1-40 form the signal peptide; the sequence is MMLPQNSWHIDFGRCCCHQNLFSAVVTCILLLNSCFLISS. Residues 41 to 1359 lie on the Extracellular side of the membrane; it reads FNGTDLELRL…LKSLNASSGH (1319 aa). Asn42, Asn78, Asn120, and Asn161 each carry an N-linked (GlcNAc...) asparagine glycan. 9 SRCR domains span residues 48–148, 155–255, 262–362, 369–469, 476–576, 583–683, 690–790, 795–895, and 900–1000; these read LRLV…VNCY, LRLV…LTCY, LRLV…VICS, LRLA…VICS, LRLV…VTCS, LRLV…LICS, PRLV…VVCS, and VRLV…VICT. Cystine bridges form between Cys73–Cys137, Cys86–Cys147, and Cys117–Cys127. 6 disulfide bridges follow: Cys180–Cys244, Cys193–Cys254, Cys224–Cys234, Cys287–Cys351, Cys300–Cys361, and Cys331–Cys341. 5 N-linked (GlcNAc...) asparagine glycosylation sites follow: Asn334, Asn377, Asn441, Asn548, and Asn637. 18 disulfides stabilise this stretch: Cys394–Cys458, Cys407–Cys468, Cys438–Cys448, Cys501–Cys565, Cys514–Cys575, Cys545–Cys555, Cys608–Cys672, Cys621–Cys682, Cys652–Cys662, Cys715–Cys779, Cys728–Cys789, Cys759–Cys769, Cys820–Cys884, Cys833–Cys894, Cys864–Cys874, Cys925–Cys989, Cys938–Cys999, and Cys969–Cys979. N-linked (GlcNAc...) asparagine glycosylation is found at Asn972, Asn1013, Asn1084, and Asn1104. SRCR domains lie at 1036 to 1136, 1141 to 1243, and 1246 to 1346; these read LRLV…VICS, LRLY…ITCE, and IRVR…VRCS. 3 disulfides stabilise this stretch: Cys1061–Cys1125, Cys1074–Cys1135, and Cys1105–Cys1115. N-linked (GlcNAc...) asparagine glycans are attached at residues Asn1161 and Asn1171. Intrachain disulfides connect Cys1181–Cys1242, Cys1212–Cys1222, Cys1271–Cys1335, Cys1284–Cys1345, and Cys1315–Cys1325. N-linked (GlcNAc...) asparagine glycosylation is found at Asn1318 and Asn1354. The chain crosses the membrane as a helical span at residues 1360 to 1380; sequence LALILSSIFGLLLLVLFILFL. Over 1381–1453 the chain is Cytoplasmic; sequence TWCRVQKQKH…GVLPASEATK (73 aa). Positions 1418 to 1435 are enriched in basic and acidic residues; the sequence is EDPHGTRTSDDTPNHGCE. Residues 1418 to 1453 form a disordered region; sequence EDPHGTRTSDDTPNHGCEDASDTSLLGVLPASEATK.

Isoform 1 is highly expressed in the spleen, lymph nodes, thymus, and fetal liver and weakly expressed in bone marrow and no expression was found in peripheral blood leukocytes. Isoform 1 expression is restricted to the monocyte and macrophage cell lines. Isoform 2 is only expressed in spleen.

Its subcellular location is the cell membrane. The protein localises to the secreted. The sequence is that of Scavenger receptor cysteine-rich type 1 protein M160 (CD163L1) from Homo sapiens (Human).